The sequence spans 331 residues: Pantothenate kinase (331 aa).

Residue 109–116 (GSVAVGKS) participates in ATP binding.

This sequence belongs to the prokaryotic pantothenate kinase family.

The protein localises to the cytoplasm. The enzyme catalyses (R)-pantothenate + ATP = (R)-4'-phosphopantothenate + ADP + H(+). Its pathway is cofactor biosynthesis; coenzyme A biosynthesis; CoA from (R)-pantothenate: step 1/5. The sequence is that of Pantothenate kinase from Rhizobium johnstonii (strain DSM 114642 / LMG 32736 / 3841) (Rhizobium leguminosarum bv. viciae).